Consider the following 1369-residue polypeptide: Probable tegument protein antigen 3 (1369 aa).

Positions 1347-1369 (DRRGAVPHDNPQYIPMDAMDPSQ) are disordered.

The protein resides in the virion tegument. The chain is Probable tegument protein antigen 3 (3) from Connochaetes taurinus (Blue wildebeest).